The chain runs to 467 residues: Serine decarboxylase 2 (467 aa).

His-178 provides a ligand contact to substrate. Residue Lys-290 is modified to N6-(pyridoxal phosphate)lysine.

Belongs to the group II decarboxylase family. Requires pyridoxal 5'-phosphate as cofactor.

It catalyses the reaction L-serine + H(+) = ethanolamine + CO2. Its function is as follows. Catalyzes the biosynthesis of ethanolamine from serine. Decarboxylation of free serine is the major source of ethanolamine production in plants and ethanolamine metabolism is crucial for the synthesis of choline, phosphatidylethanolamine (PE) and phosphatidylcholine (PC), and thus for plant growth. In Oryza sativa subsp. japonica (Rice), this protein is Serine decarboxylase 2.